A 432-amino-acid chain; its full sequence is Adenylosuccinate synthetase (432 aa).

Residues 13–19 and 41–43 contribute to the GTP site; these read GDEGKGK and GHT. The active-site Proton acceptor is the Asp-14. The Mg(2+) site is built by Asp-14 and Gly-41. IMP is bound by residues 14–17, 39–42, Thr-130, Arg-144, Gln-225, Thr-240, and Arg-304; these read DEGK and NAGH. Residue His-42 is the Proton donor of the active site. 300–306 serves as a coordination point for substrate; sequence ATTGRSR. Residues Arg-306, 332–334, and 415–417 contribute to the GTP site; these read KLD and STG.

Belongs to the adenylosuccinate synthetase family. In terms of assembly, homodimer. Mg(2+) is required as a cofactor.

The protein resides in the cytoplasm. The catalysed reaction is IMP + L-aspartate + GTP = N(6)-(1,2-dicarboxyethyl)-AMP + GDP + phosphate + 2 H(+). Its pathway is purine metabolism; AMP biosynthesis via de novo pathway; AMP from IMP: step 1/2. Plays an important role in the de novo pathway of purine nucleotide biosynthesis. Catalyzes the first committed step in the biosynthesis of AMP from IMP. In Yersinia pestis bv. Antiqua (strain Antiqua), this protein is Adenylosuccinate synthetase.